A 253-amino-acid chain; its full sequence is Protein C1orf43 homolog (253 aa).

Residues 11–31 (VNVVLVMAYGSLVFVLLFIFV) traverse the membrane as a helical segment. Residues 194–213 (SGSSQRQHQSAAKDLTQSPE) form a disordered region.

It is found in the membrane. The protein resides in the golgi apparatus. It localises to the mitochondrion. Its function is as follows. General regulator of phagocytosis. Required to uptake Gram negative bacterium by macrophages. The polypeptide is Protein C1orf43 homolog (Bos taurus (Bovine)).